A 264-amino-acid polypeptide reads, in one-letter code: MEVFKALFKSKEAYTVDVDPMKDSDEHDLPRDPLSIRVTGEEEVNHIPYPYFDEIPTEEEMKKKSAEFYKSMKKRRTVRKISSEPVPLEVIENIVRVAGTSPSGAHTEPWTYVVIRDPDLKKQIKEVVEEEEQLNYARRMGEKWVQDLSILKTTWSKPYIETAPYLILIFKQVYGIKPDGDKKVHYYNEISVCISCGLLLAAIQNAGLVTVTSTPMNAGPRLRVLLNRPQNEKLIMLLPVGYPAKDAEVPNLTRKPLEEIMVLK.

Residues 75-79 and 103-104 each bind FMN; these read RRTVR and SG. Residues Ala-105, Glu-132, Tyr-136, and Lys-157 each contribute to the 3-iodo-L-tyrosine site. Residues 212–214 and Arg-254 contribute to the FMN site; that span reads TST.

The protein belongs to the nitroreductase family. FMN serves as cofactor.

It catalyses the reaction 2 iodide + L-tyrosine + 2 NADP(+) = 3,5-diiodo-L-tyrosine + 2 NADPH + H(+). It carries out the reaction iodide + L-tyrosine + NADP(+) = 3-iodo-L-tyrosine + NADPH. The catalysed reaction is 3-iodo-L-tyrosine + iodide + NADP(+) = 3,5-diiodo-L-tyrosine + NADPH + H(+). The enzyme catalyses L-tyrosine + chloride + NADP(+) = 3-chloro-L-tyrosine + NADPH. It catalyses the reaction bromide + L-tyrosine + NADP(+) = 3-bromo-L-tyrosine + NADPH. Catalyzes the dehalogenation of halotyrosines such as 3,5-diiodo-L-tyrosine. Likely to also catalyze the dehalogenation of other halotyrosines such as 3-bromo-L-tyrosine, 3-chloro-L-tyrosine and 3-iodo-L-tyrosine. This chain is Iodotyrosine deiodinase, found in Nematostella vectensis (Starlet sea anemone).